A 95-amino-acid polypeptide reads, in one-letter code: MVYISNGQVLDSRSQSPWRLSFITDFFWGIAEFVVLFFRTLLQQDVKKRRGYGSSSDSRYDDGRGPPGNPPRRRMGRINHLQGPNPPPMAGGUGR.

The helical transmembrane segment at 20-42 threads the bilayer; it reads LSFITDFFWGIAEFVVLFFRTLL. Residues 47-95 are disordered; that stretch reads KKRRGYGSSSDSRYDDGRGPPGNPPRRRMGRINHLQGPNPPPMAGGUGR. Position 93 (selenocysteine 93) is a non-standard amino acid, selenocysteine.

This sequence belongs to the selenoprotein K family. Interacts with DERL1, DERL2, DERL3 and SELENOS. The SELENOK-SELENOS complex interacts with VCP. Interacts with ZDHHC6. Post-translationally, cleaved by CAPN2/m-calpain in resting macrophages but not in activated macrophages. Macrophage activation up-regulates expression of the calpain inhibitor CAST/calpastatin, resulting in inhibition of CAPN2 activity. Truncated SELENOK proteins produced by failed UGA/Sec decoding are ubiquitinated by the CRL2(KLHDC2) complex, which recognizes the diglycine (Gly-Gly) at the C-terminus of truncated SELENOK proteins.

It localises to the endoplasmic reticulum membrane. Its subcellular location is the cell membrane. Functionally, required for Ca(2+) flux in immune cells and plays a role in T-cell proliferation and in T-cell and neutrophil migration. Involved in endoplasmic reticulum-associated degradation (ERAD) of soluble glycosylated proteins. Required for palmitoylation and cell surface expression of CD36 and involved in macrophage uptake of low-density lipoprotein and in foam cell formation. Together with ZDHHC6, required for palmitoylation of ITPR1 in immune cells, leading to regulate ITPR1 stability and function. Plays a role in protection of cells from ER stress-induced apoptosis. Protects cells from oxidative stress when overexpressed in cardiomyocytes. This is Selenoprotein K from Bos taurus (Bovine).